The primary structure comprises 280 residues: Endochitinase A (280 aa).

Residues 1 to 25 form the signal peptide; that stretch reads MANAPRILALGLLALLCAAAGPAAA. Positions 26-60 constitute a Chitin-binding type-1 domain; it reads QNCGCQPNFCCSKFGYCGTTDAYCGDGCQSGPCRS. 4 disulfides stabilise this stretch: Cys-28–Cys-36, Cys-30–Cys-42, Cys-35–Cys-49, and Cys-53–Cys-58. The interval 61–77 is hinge region (poly-Gly); that stretch reads GGGGGGGGGGGGGGSGG. The interval 78-280 is catalytic; sequence ANVANVVTDA…RVDPGPNLTC (203 aa). Cys-100 and Cys-149 are oxidised to a cystine. Residue Glu-144 is the Proton donor of the active site. Asn-155 carries an N-linked (GlcNAc...) asparagine glycan. 2 disulfide bridges follow: Cys-161/Cys-170 and Cys-248/Cys-280. Asn-277 carries an N-linked (GlcNAc...) asparagine glycan.

The protein belongs to the glycosyl hydrolase 19 family. Chitinase class IV subfamily.

It localises to the secreted. The enzyme catalyses Random endo-hydrolysis of N-acetyl-beta-D-glucosaminide (1-&gt;4)-beta-linkages in chitin and chitodextrins.. With respect to regulation, inactivated by l-ethyl-3-(3-dimethylaminopropyl)carbodiimide (EDC) in the absence of exogenous nucleophiles (e.g. GlcNAc4, GlcNAc3 and GlcNAc2). Not inhibited by tetra-N-acetylchitopentaose or modified chitotetraose substrate TMG-chitotriomycin-pMP, containing a free, non-acetylated glucosaminyl residue or a N-trimethylamino glucosamine (TMG) residue at the non-reducing terminus, respectively. In terms of biological role, defense against chitin-containing fungal pathogens. Hydrolyzes glycol chitin and tetra-N-acetylchitotetraose in vitro. Its action is countered by fungal polyglycine hydrolases and fungalysin, that cleave the chitin-binding domain from the protein. This chain is Endochitinase A, found in Zea mays (Maize).